Reading from the N-terminus, the 3391-residue chain is Genome polyprotein (3391 aa).

The interaction with host EXOC1 stretch occupies residues 1–15; sequence MNNQRKKARNTPFNM. Residues 1-101 are Cytoplasmic-facing; the sequence is MNNQRKKARN…LNILNRRRRT (101 aa). Residues 37–72 form a hydrophobic; homodimerization of capsid protein C region; that stretch reads MLQGRGPLKLFMALVAFLRFLTIPPTAGILKRWGTI. The propeptide at 101–114 is ER anchor for the capsid protein C, removed in mature form by serine protease NS3; it reads TAGMIIMLIPTVMA. The chain crosses the membrane as a helical span at residues 102 to 122; the sequence is AGMIIMLIPTVMAFHLTTRNG. The Extracellular segment spans residues 123–238; it reads EPHMIVSRQE…GAWKHAQRIE (116 aa). Residue N183 is glycosylated (N-linked (GlcNAc...) asparagine; by host). The chain crosses the membrane as a helical span at residues 239–259; it reads TWILRHPGFTIMAAILAYTIG. Over 260–265 the chain is Cytoplasmic; the sequence is TTHFQR. A helical transmembrane segment spans residues 266-280; the sequence is ALIFILLTAVAPSMT. Topologically, residues 281-725 are extracellular; the sequence is MRCIGISNRD…LHQVFGAIYG (445 aa). 4 cysteine pairs are disulfide-bonded: C283-C310, C340-C401, C354-C385, and C372-C396. An N-linked (GlcNAc...) asparagine; by host glycan is attached at N347. The fusion peptide stretch occupies residues 378 to 391; that stretch reads DRGWGNGCGLFGKG. N433 carries N-linked (GlcNAc...) asparagine; by host glycosylation. 2 cysteine pairs are disulfide-bonded: C465–C565 and C582–C613. Residues 726–746 form a helical membrane-spanning segment; it reads AAFSGVSWIMKILIGVIITWI. Topologically, residues 747-752 are cytoplasmic; that stretch reads GMNSRS. Residues 753–773 form a helical membrane-spanning segment; that stretch reads TSLSVSLVLVGVVTLYLGVMV. At 774–1195 the chain is on the extracellular side; it reads QADSGCVVSW…MVGATMTDDI (422 aa). 6 disulfides stabilise this stretch: C779–C790, C830–C918, C954–C998, C1055–C1104, C1066–C1088, and C1087–C1091. 2 N-linked (GlcNAc...) asparagine; by host glycosylation sites follow: N905 and N982. The helical transmembrane segment at 1196 to 1220 threads the bilayer; it reads GMGVTYLALLAAFKVRPTFAAGLLL. The Cytoplasmic segment spans residues 1221-1226; that stretch reads RKLTSK. The helical transmembrane segment at 1227–1245 threads the bilayer; it reads ELMMTTIGIVLLSQSTIPE. The Lumenal segment spans residues 1246 to 1269; sequence TILELTDALALGMMVLKMVRKMEK. Residues 1270-1290 traverse the membrane as a helical segment; sequence YQLAVTIMAILCVPNAVILQN. Position 1291 (A1291) is a topological domain, cytoplasmic. Residues 1292 to 1310 traverse the membrane as a helical segment; that stretch reads WKVSCTILAVVSVSPLFLT. Topologically, residues 1311–1317 are lumenal; it reads SSQQKAD. A helical membrane pass occupies residues 1318 to 1338; it reads WIPLALTIKGLNPTAIFLTTL. At 1339 to 1346 the chain is on the cytoplasmic side; sequence SRTNKKRS. A helical membrane pass occupies residues 1347–1367; that stretch reads WPLNEAIMAVGMVSILASSLL. Over 1368–1370 the chain is Lumenal; it reads KND. Residues 1371–1391 traverse the membrane as a helical segment; that stretch reads IPMTGPLVAGGLLTVCYVLTG. At 1392–1447 the chain is on the cytoplasmic side; that stretch reads RSADLELERAADVKWEDQAEISGSSPILSITISEDGSMSIKNEEEEQTLTILIRTG. Residues 1398 to 1437 are interacts with and activates NS3 protease; it reads LERAADVKWEDQAEISGSSPILSITISEDGSMSIKNEEEE. The segment at residues 1448-1468 is an intramembrane region (helical); the sequence is LLVISGLFPVSIPITAAAWYL. Topologically, residues 1469 to 2147 are cytoplasmic; that stretch reads WEVKKQRAGV…LSELPETLET (679 aa). The region spanning 1476 to 1653 is the Peptidase S7 domain; the sequence is AGVLWDVPSP…EKSIEDNPEI (178 aa). Active-site charge relay system; for serine protease NS3 activity residues include H1526, D1550, and S1610. The Helicase ATP-binding domain maps to 1655–1811; that stretch reads DDIFRKRKLT…QSNAPIMDEE (157 aa). The important for RNA-binding stretch occupies residues 1659 to 1662; that stretch reads RKRK. Residue 1668–1675 coordinates ATP; that stretch reads LHPGAGKT. A DEAH box motif is present at residues 1759 to 1762; it reads DEAH. Residues 1821 to 1988 form the Helicase C-terminal domain; it reads SGHEWVTDFK…IIPSMFEPER (168 aa). K1863 carries the post-translational modification N6-acetyllysine; by host. The helical transmembrane segment at 2148–2168 threads the bilayer; sequence LLLLTLLATVTGGIFLFLMSG. Topologically, residues 2169-2170 are lumenal; sequence RG. The helical intramembrane region spans 2171–2191; that stretch reads IGKMTLGMCCIITASILLWYA. A topological domain (lumenal) is located at residue Q2192. A helical membrane pass occupies residues 2193-2213; sequence IQPHWIAASIILEFFLIVLLI. The Cytoplasmic portion of the chain corresponds to 2214 to 2228; it reads PEPEKQRTPQDNQLT. Residues 2229 to 2249 traverse the membrane as a helical segment; it reads YVVIAILTVVAATMANEMGFL. At 2250-2274 the chain is on the lumenal side; it reads EKTKKDLGLGSITTQQPESNILDID. The segment at residues 2275–2295 is an intramembrane region (helical); sequence LRPASAWTLYAVATTFVTPML. Over 2296–2316 the chain is Lumenal; it reads RHSIENSSVNVSLTAIANQAT. N2301 and N2305 each carry an N-linked (GlcNAc...) asparagine; by host glycan. Residues 2317–2337 constitute an intramembrane region (helical); it reads VLMGLGKGWPLSKMDIGVPLL. Residues 2338-2347 lie on the Lumenal side of the membrane; that stretch reads AIGCYSQVNP. Residues 2348-2368 traverse the membrane as a helical segment; sequence ITLTAALFLLVAHYAIIGPGL. At 2369 to 2413 the chain is on the cytoplasmic side; that stretch reads QAKATREAQKRAAAGIMKNPTVDGITVIDLDPIPYDPKFEKQLGQ. The helical transmembrane segment at 2414 to 2434 threads the bilayer; that stretch reads VMLLVLCVTQVLMMRTTWALC. Residues 2435–2459 lie on the Lumenal side of the membrane; the sequence is EALTLATGPISTLWEGNPGRFWNTT. Residue N2457 is glycosylated (N-linked (GlcNAc...) asparagine; by host). Residues 2460 to 2480 form a helical membrane-spanning segment; sequence IAVSMANIFRGSYLAGAGLLF. Residues 2481 to 3391 are Cytoplasmic-facing; that stretch reads SIMKNTTNTR…KEEEEAGVLW (911 aa). One can recognise an mRNA cap 0-1 NS5-type MT domain in the interval 2493-2755; it reads TGNIGETLGE…DVDLGSGTRN (263 aa). S2547 is a binding site for S-adenosyl-L-methionine. S2547 is modified (phosphoserine). The For 2'-O-MTase activity role is filled by K2552. The SUMO-interacting motif signature appears at 2568–2571; it reads VVDL. S-adenosyl-L-methionine contacts are provided by G2577, W2578, T2595, K2596, D2622, and V2623. Catalysis depends on D2637, which acts as the For 2'-O-MTase activity. I2638 is a binding site for S-adenosyl-L-methionine. Active-site for 2'-O-MTase activity residues include K2672 and E2708. Y2710 provides a ligand contact to S-adenosyl-L-methionine. Residues E2929, H2933, C2938, and C2941 each coordinate Zn(2+). A RdRp catalytic domain is found at 3019–3168; the sequence is GAMYADDTAG…KPLDDRFASA (150 aa). Zn(2+) is bound by residues H3203, C3219, and C3338.

This sequence in the N-terminal section; belongs to the class I-like SAM-binding methyltransferase superfamily. mRNA cap 0-1 NS5-type methyltransferase family. As to quaternary structure, homodimer. Interacts (via N-terminus) with host EXOC1 (via C-terminus); this interaction results in EXOC1 degradation through the proteasome degradation pathway. In terms of assembly, forms heterodimers with envelope protein E in the endoplasmic reticulum and Golgi. Homodimer; in the endoplasmic reticulum and Golgi. Interacts with protein prM. Interacts with non-structural protein 1. As to quaternary structure, homodimer; Homohexamer when secreted. Interacts with envelope protein E. Interacts with host PRKAA1. In terms of assembly, interacts (via N-terminus) with serine protease NS3. Forms a heterodimer with serine protease NS3. May form homooligomers. As to quaternary structure, forms a heterodimer with NS2B. Interacts with NS4B. Interacts with unphosphorylated RNA-directed RNA polymerase NS5; this interaction stimulates RNA-directed RNA polymerase NS5 guanylyltransferase activity. Interacts with host SHFL. In terms of assembly, interacts with host MAVS; this interaction inhibits the synthesis of IFN-beta. Interacts with host MAVS; this interaction inhibits the synthesis of IFN-beta. Interacts with host SHFL. Interacts with host AUP1; the interaction occurs in the presence of Dengue virus NS4B and induces lipophagy which facilitates production of virus progeny particles. May interact with host SRPRA and SEC61G. Interacts with serine protease NS. As to quaternary structure, homodimer. Interacts with host STAT2; this interaction inhibits the phosphorylation of the latter, and, when all viral proteins are present (polyprotein), targets STAT2 for degradation. Interacts with serine protease NS3. Interacts with host PAF1 complex; the interaction may prevent the recruitment of the PAF1 complex to interferon-responsive genes, and thus reduces the immune response. Specific enzymatic cleavages in vivo yield mature proteins. Cleavages in the lumen of endoplasmic reticulum are performed by host signal peptidase, whereas cleavages in the cytoplasmic side are performed by serine protease NS3. Signal cleavage at the 2K-4B site requires a prior NS3 protease-mediated cleavage at the 4A-2K site. In terms of processing, cleaved in post-Golgi vesicles by a host furin, releasing the mature small envelope protein M, and peptide pr. This cleavage is incomplete as up to 30% of viral particles still carry uncleaved prM. Post-translationally, N-glycosylated. N-glycosylated. The excreted form is glycosylated and this is required for efficient secretion of the protein from infected cells. In terms of processing, acetylated by host KAT5. Acetylation modulates NS3 RNA-binding and unwinding activities and plays an important positive role for viral replication. Post-translationally, sumoylation of RNA-directed RNA polymerase NS5 increases NS5 protein stability allowing proper viral RNA replication. Phosphorylated on serines residues. This phosphorylation may trigger NS5 nuclear localization.

The protein localises to the virion. Its subcellular location is the host nucleus. The protein resides in the host cytoplasm. It localises to the host perinuclear region. It is found in the secreted. The protein localises to the virion membrane. Its subcellular location is the host endoplasmic reticulum membrane. The protein resides in the host mitochondrion. It catalyses the reaction Selective hydrolysis of -Xaa-Xaa-|-Yaa- bonds in which each of the Xaa can be either Arg or Lys and Yaa can be either Ser or Ala.. The catalysed reaction is RNA(n) + a ribonucleoside 5'-triphosphate = RNA(n+1) + diphosphate. The enzyme catalyses a ribonucleoside 5'-triphosphate + H2O = a ribonucleoside 5'-diphosphate + phosphate + H(+). It carries out the reaction ATP + H2O = ADP + phosphate + H(+). It catalyses the reaction a 5'-end (5'-triphosphoguanosine)-ribonucleoside in mRNA + S-adenosyl-L-methionine = a 5'-end (N(7)-methyl 5'-triphosphoguanosine)-ribonucleoside in mRNA + S-adenosyl-L-homocysteine. The catalysed reaction is a 5'-end (N(7)-methyl 5'-triphosphoguanosine)-ribonucleoside in mRNA + S-adenosyl-L-methionine = a 5'-end (N(7)-methyl 5'-triphosphoguanosine)-(2'-O-methyl-ribonucleoside) in mRNA + S-adenosyl-L-homocysteine + H(+). Plays a role in virus budding by binding to the cell membrane and gathering the viral RNA into a nucleocapsid that forms the core of a mature virus particle. During virus entry, may induce genome penetration into the host cytoplasm after hemifusion induced by the surface proteins. Can migrate to the cell nucleus where it modulates host functions. Overcomes the anti-viral effects of host EXOC1 by sequestering and degrading the latter through the proteasome degradation pathway. Its function is as follows. Inhibits RNA silencing by interfering with host Dicer. Functionally, prevents premature fusion activity of envelope proteins in trans-Golgi by binding to envelope protein E at pH6.0. After virion release in extracellular space, gets dissociated from E dimers. In terms of biological role, acts as a chaperone for envelope protein E during intracellular virion assembly by masking and inactivating envelope protein E fusion peptide. prM is the only viral peptide matured by host furin in the trans-Golgi network probably to avoid catastrophic activation of the viral fusion activity in acidic Golgi compartment prior to virion release. prM-E cleavage is inefficient, and many virions are only partially matured. These uncleaved prM would play a role in immune evasion. May play a role in virus budding. Exerts cytotoxic effects by activating a mitochondrial apoptotic pathway through M ectodomain. May display a viroporin activity. Its function is as follows. Binds to host cell surface receptor and mediates fusion between viral and cellular membranes. Envelope protein is synthesized in the endoplasmic reticulum in the form of heterodimer with protein prM. They play a role in virion budding in the ER, and the newly formed immature particle is covered with 60 spikes composed of heterodimer between precursor prM and envelope protein E. The virion is transported to the Golgi apparatus where the low pH causes dissociation of PrM-E heterodimers and formation of E homodimers. prM-E cleavage is inefficient, and many virions are only partially matured. These uncleaved prM would play a role in immune evasion. Functionally, involved in immune evasion, pathogenesis and viral replication. Once cleaved off the polyprotein, is targeted to three destinations: the viral replication cycle, the plasma membrane and the extracellular compartment. Essential for viral replication. Required for formation of the replication complex and recruitment of other non-structural proteins to the ER-derived membrane structures. Excreted as a hexameric lipoparticle that plays a role against host immune response. Antagonizing the complement function. Binds to the host macrophages and dendritic cells. Inhibits signal transduction originating from Toll-like receptor 3 (TLR3). Mediates complement activation, which may contribute to the pathogenesis of the vascular leakage that occurs in severe dengue disease. Activates autophagy through the AMPK/ERK/mTOR signaling pathway. Mechanistically, acts as the assembly platform for STK11-AMPK interactions and promotes STK11-AMPK interactions. In turn, promotes phosphorylation of the AMPK kinase structural domain and activates AMPK, thereby positively regulating the AMPK/ERK/mTOR signaling pathway and inducing autophagy. In terms of biological role, disrupts the host endothelial glycocalyx layer of host pulmonary microvascular endothelial cells, inducing degradation of sialic acid and shedding of heparan sulfate proteoglycans. NS1 induces expression of sialidases, heparanase, and activates cathepsin L, which activates heparanase via enzymatic cleavage. These effects are probably linked to the endothelial hyperpermeability observed in severe dengue disease. Component of the viral RNA replication complex that functions in virion assembly and antagonizes the host immune response. Its function is as follows. Required cofactor for the serine protease function of NS3. May have membrane-destabilizing activity and form viroporins. Functionally, displays three enzymatic activities: serine protease, NTPase and RNA helicase. NS3 serine protease, in association with NS2B, performs its autocleavage and cleaves the polyprotein at dibasic sites in the cytoplasm: C-prM, NS2A-NS2B, NS2B-NS3, NS3-NS4A, NS4A-2K and NS4B-NS5. NS3 RNA helicase binds RNA and unwinds dsRNA in the 3' to 5' direction. In terms of biological role, regulates the ATPase activity of the NS3 helicase activity. NS4A allows NS3 helicase to conserve energy during unwinding. Plays a role in the inhibition of the host innate immune response. Interacts with host MAVS and thereby prevents the interaction between RIGI and MAVS. In turn, IFN-beta production is impaired. Interacts with host AUP1 which mediates induction of lipophagy in host cells and facilitates production of virus progeny particles. Functions as a signal peptide for NS4B and is required for the interferon antagonism activity of the latter. Its function is as follows. Induces the formation of ER-derived membrane vesicles where the viral replication takes place. Inhibits interferon (IFN)-induced host STAT1 phosphorylation and nuclear translocation, thereby preventing the establishment of cellular antiviral state by blocking the IFN-alpha/beta pathway. Functionally, replicates the viral (+) and (-) RNA genome, and performs the capping of genomes in the cytoplasm. NS5 methylates viral RNA cap at guanine N-7 and ribose 2'-O positions. Besides its role in RNA genome replication, also prevents the establishment of cellular antiviral state by blocking the interferon-alpha/beta (IFN-alpha/beta) signaling pathway. Inhibits host TYK2 and STAT2 phosphorylation, thereby preventing activation of JAK-STAT signaling pathway. May reduce immune responses by preventing the recruitment of the host PAF1 complex to interferon-responsive genes. The chain is Genome polyprotein from Aedimorphus (Red guenon).